A 61-amino-acid chain; its full sequence is Putative antitoxin PYRAB11980 (61 aa).

This sequence belongs to the UPF0165 family.

Functionally, possibly the antitoxin component of a type II toxin-antitoxin (TA) system. The sequence is that of Putative antitoxin PYRAB11980 from Pyrococcus abyssi (strain GE5 / Orsay).